The sequence spans 410 residues: Acetate kinase (410 aa).

Mg(2+) is bound at residue Asn-7. Lys-14 contacts ATP. Arg-88 contributes to the substrate binding site. The active-site Proton donor/acceptor is Asp-145. Residues 203–207, 278–280, and 326–330 each bind ATP; these read HAGNG, DTR, and GIGEN. Glu-379 provides a ligand contact to Mg(2+).

It belongs to the acetokinase family. In terms of assembly, homodimer. It depends on Mg(2+) as a cofactor. The cofactor is Mn(2+).

It is found in the cytoplasm. The enzyme catalyses acetate + ATP = acetyl phosphate + ADP. It participates in metabolic intermediate biosynthesis; acetyl-CoA biosynthesis; acetyl-CoA from acetate: step 1/2. In terms of biological role, catalyzes the formation of acetyl phosphate from acetate and ATP. Can also catalyze the reverse reaction. This is Acetate kinase from Onion yellows phytoplasma (strain OY-M).